A 769-amino-acid chain; its full sequence is PDZ domain-containing protein 4 (769 aa).

Residues 130–214 (EVELYKSSHR…TNISLLVARP (85 aa)) enclose the PDZ domain. The tract at residues 221-315 (RWKDSDRDDF…TNTPGSLRKF (95 aa)) is disordered. Positions 229–239 (DFLDDFGSENE) are enriched in acidic residues. Ser-236 is modified (phosphoserine). A compositionally biased stretch (basic and acidic residues) spans 282 to 298 (RTDESTRNEESSEHDLL). Positions 389–419 (VNRNESLGHEMAMLEEELRHLEFKCRNILRA) form a coiled coil. The tract at residues 445-579 (ASEPKKHELS…RHRGQGQEGE (135 aa)) is disordered. The span at 447–467 (EPKKHELSDISELPEKSDKDS) shows a compositional bias: basic and acidic residues. Ser-454 is subject to Phosphoserine. A compositionally biased stretch (polar residues) spans 468–479 (TSAYNTGESCRS). The span at 530-547 (LSRDPEAGRRQHAEERGR) shows a compositional bias: basic and acidic residues.

In terms of tissue distribution, brain-specific. Expressed in fetal and adult brain. Up-regulated in synovial carcinomas.

Its subcellular location is the cytoplasm. The protein resides in the cell cortex. The sequence is that of PDZ domain-containing protein 4 (PDZD4) from Homo sapiens (Human).